Consider the following 656-residue polypeptide: uncharacterized protein (656 aa).

This is an uncharacterized protein from Rickettsia prowazekii (strain Madrid E).